We begin with the raw amino-acid sequence, 94 residues long: Evasin P1104 (94 aa).

The first 28 residues, 1 to 28 (MASNLFTIFQLAGFVAIVFIVNLHSVSA), serve as a signal peptide directing secretion. Intrachain disulfides connect Cys-48-Cys-66, Cys-52-Cys-68, and Cys-62-Cys-79. N-linked (GlcNAc...) asparagine glycosylation occurs at Asn-51.

It localises to the secreted. Its function is as follows. Salivary chemokine-binding protein which binds to host chemokines CXCL1, CXCL2, CXCL3, CXCL5, CXCL6, CXCL12 and CXCL13. This Ixodes ricinus (Common tick) protein is Evasin P1104.